We begin with the raw amino-acid sequence, 466 residues long: Oxysterol-binding protein 4 (466 aa).

The span at 1–12 (MEIGTSSTTNNI) shows a compositional bias: polar residues. Residues 1–67 (MEIGTSSTTN…STSPPSPPIE (67 aa)) form a disordered region. Over residues 24-45 (NNNNHNNNSSNNSSNNNSISSS) the composition is skewed to low complexity. The segment covering 46–60 (PTDSSQLMNGEQSTS) has biased composition (polar residues).

Belongs to the OSBP family.

The protein is Oxysterol-binding protein 4 (osbD) of Dictyostelium discoideum (Social amoeba).